A 428-amino-acid polypeptide reads, in one-letter code: Enolase (428 aa).

Position 162 (Gln162) interacts with (2R)-2-phosphoglycerate. Residue Glu204 is the Proton donor of the active site. Mg(2+)-binding residues include Asp241, Glu283, and Asp310. (2R)-2-phosphoglycerate contacts are provided by Lys335, Arg364, Ser365, and Lys386. The Proton acceptor role is filled by Lys335.

It belongs to the enolase family. Mg(2+) is required as a cofactor.

The protein resides in the cytoplasm. Its subcellular location is the secreted. It is found in the cell surface. The catalysed reaction is (2R)-2-phosphoglycerate = phosphoenolpyruvate + H2O. Its pathway is carbohydrate degradation; glycolysis; pyruvate from D-glyceraldehyde 3-phosphate: step 4/5. Its function is as follows. Catalyzes the reversible conversion of 2-phosphoglycerate (2-PG) into phosphoenolpyruvate (PEP). It is essential for the degradation of carbohydrates via glycolysis. The sequence is that of Enolase from Rhodococcus erythropolis (strain PR4 / NBRC 100887).